The following is a 346-amino-acid chain: 3-keto-steroid reductase ERG27 (346 aa).

NADP(+)-binding residues include Leu19, Thr42, and Lys48. Catalysis depends on proton donor residues Ser182 and Tyr205. The NADP(+) site is built by Tyr205, Lys209, and Ser241. Lys209 functions as the Lowers pKa of active site Tyr in the catalytic mechanism. The helical transmembrane segment at 242-262 (FSFFQYLNVFTYYGMLFLFYL) threads the bilayer. Asn272 carries N-linked (GlcNAc...) asparagine glycosylation.

It belongs to the short-chain dehydrogenases/reductases (SDR) family. ERG27 subfamily. As to quaternary structure, heterotetramer of ERG25, ERG26, ERG27 and ERG28. ERG28 acts as a scaffold to tether ERG27 and other 4,4-demethylation-related enzymes, forming a demethylation enzyme complex, in the endoplasmic reticulum. Interacts with ERG25 and ERG28. Also interacts with ERG7, but only in lipid particles.

It is found in the endoplasmic reticulum membrane. The protein resides in the lipid droplet. It catalyses the reaction 3-dehydro-4alpha-methylzymosterol + NADPH + H(+) = 4alpha-methylzymosterol + NADP(+). Its pathway is steroid biosynthesis; zymosterol biosynthesis; zymosterol from lanosterol: step 5/6. Its function is as follows. 3-keto-steroid reductase; part of the third module of ergosterol biosynthesis pathway that includes the late steps of the pathway. ERG27 is a catalytic component of the C-4 demethylation complex that catalyzes the reduction of the keto group on the C-3. The third module or late pathway involves the ergosterol synthesis itself through consecutive reactions that mainly occur in the endoplasmic reticulum (ER) membrane. Firstly, the squalene synthase ERG9 catalyzes the condensation of 2 farnesyl pyrophosphate moieties to form squalene, which is the precursor of all steroids. Squalene synthase is crucial for balancing the incorporation of farnesyl diphosphate (FPP) into sterol and nonsterol isoprene synthesis. Secondly, the squalene epoxidase ERG1 catalyzes the stereospecific oxidation of squalene to (S)-2,3-epoxysqualene, which is considered to be a rate-limiting enzyme in steroid biosynthesis. Then, the lanosterol synthase ERG7 catalyzes the cyclization of (S)-2,3 oxidosqualene to lanosterol, a reaction that forms the sterol core. In the next steps, lanosterol is transformed to zymosterol through a complex process involving various demethylation, reduction and desaturation reactions. The lanosterol 14-alpha-demethylase ERG11 (also known as CYP51) catalyzes C14-demethylation of lanosterol to produce 4,4'-dimethyl cholesta-8,14,24-triene-3-beta-ol, which is critical for ergosterol biosynthesis. The C-14 reductase ERG24 reduces the C14=C15 double bond of 4,4-dimethyl-cholesta-8,14,24-trienol to produce 4,4-dimethyl-cholesta-8,24-dienol. 4,4-dimethyl-cholesta-8,24-dienol is substrate of the C-4 demethylation complex ERG25-ERG26-ERG27 in which ERG25 catalyzes the three-step monooxygenation required for the demethylation of 4,4-dimethyl and 4alpha-methylsterols, ERG26 catalyzes the oxidative decarboxylation that results in a reduction of the 3-beta-hydroxy group at the C-3 carbon to an oxo group, and ERG27 is responsible for the reduction of the keto group on the C-3. ERG28 has a role as a scaffold to help anchor ERG25, ERG26 and ERG27 to the endoplasmic reticulum and ERG29 regulates the activity of the iron-containing C4-methylsterol oxidase ERG25. Then, the sterol 24-C-methyltransferase ERG6 catalyzes the methyl transfer from S-adenosyl-methionine to the C-24 of zymosterol to form fecosterol. The C-8 sterol isomerase ERG2 catalyzes the reaction which results in unsaturation at C-7 in the B ring of sterols and thus converts fecosterol to episterol. The sterol-C5-desaturase ERG3 then catalyzes the introduction of a C-5 double bond in the B ring to produce 5-dehydroepisterol. The C-22 sterol desaturase ERG5 further converts 5-dehydroepisterol into ergosta-5,7,22,24(28)-tetraen-3beta-ol by forming the C-22(23) double bond in the sterol side chain. Finally, ergosta-5,7,22,24(28)-tetraen-3beta-ol is substrate of the C-24(28) sterol reductase ERG4 to produce ergosterol. Functionally, facilitates the association of ERG7 with lipid particles preventing its digestion in the endoplasmic reticulum and the lipid particles. In Candida albicans (strain SC5314 / ATCC MYA-2876) (Yeast), this protein is 3-keto-steroid reductase ERG27.